The chain runs to 283 residues: Acetylglutamate kinase (283 aa).

Substrate contacts are provided by residues 63–64 (GG), Arg85, and Asn178.

This sequence belongs to the acetylglutamate kinase family. ArgB subfamily.

It is found in the cytoplasm. The enzyme catalyses N-acetyl-L-glutamate + ATP = N-acetyl-L-glutamyl 5-phosphate + ADP. The protein operates within amino-acid biosynthesis; L-arginine biosynthesis; N(2)-acetyl-L-ornithine from L-glutamate: step 2/4. Its function is as follows. Catalyzes the ATP-dependent phosphorylation of N-acetyl-L-glutamate. In Prochlorococcus marinus (strain AS9601), this protein is Acetylglutamate kinase.